We begin with the raw amino-acid sequence, 134 residues long: Cell division protein SepF 1 (134 aa).

This sequence belongs to the SepF family. As to quaternary structure, homodimer. Interacts with FtsZ.

Its subcellular location is the cytoplasm. In terms of biological role, cell division protein that is part of the divisome complex and is recruited early to the Z-ring. Probably stimulates Z-ring formation, perhaps through the cross-linking of FtsZ protofilaments. Its function overlaps with FtsA. This is Cell division protein SepF 1 from Streptomyces avermitilis (strain ATCC 31267 / DSM 46492 / JCM 5070 / NBRC 14893 / NCIMB 12804 / NRRL 8165 / MA-4680).